The primary structure comprises 61 residues: Small ribosomal subunit protein uS14 (61 aa).

Positions 24, 27, 40, and 43 each coordinate Zn(2+).

The protein belongs to the universal ribosomal protein uS14 family. Zinc-binding uS14 subfamily. Part of the 30S ribosomal subunit. Contacts proteins S3 and S10. Zn(2+) serves as cofactor.

Its function is as follows. Binds 16S rRNA, required for the assembly of 30S particles and may also be responsible for determining the conformation of the 16S rRNA at the A site. The chain is Small ribosomal subunit protein uS14 from Dictyoglomus thermophilum (strain ATCC 35947 / DSM 3960 / H-6-12).